A 394-amino-acid chain; its full sequence is Alcohol dehydrogenase-like 3 (394 aa).

Residues Cys-48, Thr-50, His-71, Cys-101, Cys-104, Cys-107, Cys-115, and Cys-188 each contribute to the Zn(2+) site. Residues Thr-50 and His-71 each coordinate an alcohol. Thr-50 contacts NAD(+). NAD(+)-binding positions include Gly-213–Gly-218, Asp-237, Lys-242, Thr-283, Val-306, Val-306–Ile-308, Phe-333, and Arg-383.

The protein belongs to the zinc-containing alcohol dehydrogenase family. Class-III subfamily. As to quaternary structure, homodimer. The cofactor is Zn(2+).

It localises to the cytoplasm. The catalysed reaction is a primary alcohol + NAD(+) = an aldehyde + NADH + H(+). It carries out the reaction a secondary alcohol + NAD(+) = a ketone + NADH + H(+). This chain is Alcohol dehydrogenase-like 3, found in Arabidopsis thaliana (Mouse-ear cress).